We begin with the raw amino-acid sequence, 72 residues long: Small ribosomal subunit protein bS18 (72 aa).

The protein belongs to the bacterial ribosomal protein bS18 family. Part of the 30S ribosomal subunit. Forms a tight heterodimer with protein bS6.

Functionally, binds as a heterodimer with protein bS6 to the central domain of the 16S rRNA, where it helps stabilize the platform of the 30S subunit. This chain is Small ribosomal subunit protein bS18, found in Aquifex aeolicus (strain VF5).